The chain runs to 303 residues: tRNA dimethylallyltransferase (303 aa).

Residue 13 to 20 (GPTASGKS) participates in ATP binding. 15-20 (TASGKS) contributes to the substrate binding site. Interaction with substrate tRNA regions lie at residues 38 to 41 (DSMQ) and 162 to 166 (QRLLR).

It belongs to the IPP transferase family. Monomer. Mg(2+) is required as a cofactor.

It catalyses the reaction adenosine(37) in tRNA + dimethylallyl diphosphate = N(6)-dimethylallyladenosine(37) in tRNA + diphosphate. In terms of biological role, catalyzes the transfer of a dimethylallyl group onto the adenine at position 37 in tRNAs that read codons beginning with uridine, leading to the formation of N6-(dimethylallyl)adenosine (i(6)A). The sequence is that of tRNA dimethylallyltransferase from Methylocella silvestris (strain DSM 15510 / CIP 108128 / LMG 27833 / NCIMB 13906 / BL2).